The sequence spans 214 residues: RNA-binding protein 38 (214 aa).

The RRM domain maps to 11–88; the sequence is TKIFVGGLPY…RKANVNLAYL (78 aa).

It belongs to the RBM38 family. Strongly expressed in the nervous system. Expressed at early neurula stages of development.

The protein resides in the cytoplasm. It localises to the cytosol. It is found in the nucleus. Its function is as follows. RNA-binding protein that specifically bind the 3'-UTR of VegT transcripts, leading to maintain their stability and stimulate their translation, thereby playing a role in germ layer formation. VegT is a localized maternal determinant essentially required for endoderm formation. Also has some proneural function in the open neural plate and in the context of retinogenesis. May also act as a mRNA splicing factor. May play a role in myogenic differentiation. This Xenopus laevis (African clawed frog) protein is RNA-binding protein 38 (rbm38).